Reading from the N-terminus, the 1679-residue chain is [F-actin]-monooxygenase mical2b (1679 aa).

The tract at residues Gly-2 to Asp-494 is monooxygenase domain. Residues Cys-97, Cys-97–Asn-125, Glu-116, Arg-118, Arg-123, Asn-125, and Asp-398 each bind FAD. Residues Glu-516–Glu-619 form the Calponin-homology (CH) domain. The Nuclear localization signal signature appears at Arg-658–Lys-679. Disordered regions lie at residues Ile-661–Trp-772, Ser-818–Leu-838, Ser-874–Thr-907, Ser-1073–Ala-1163, Lys-1194–Pro-1247, Glu-1259–Ser-1283, Asp-1302–Pro-1342, and Arg-1473–Glu-1509. 2 stretches are compositionally biased toward basic and acidic residues: residues Pro-662 to Asn-674 and Gly-697 to Val-707. Residues Ser-874–Glu-888 show a composition bias toward polar residues. Residues Asp-1011 to Ser-1073 enclose the LIM zinc-binding domain. Over residues Ile-1086–Thr-1099 the composition is skewed to low complexity. The span at Asp-1112 to Pro-1123 shows a compositional bias: polar residues. A compositionally biased stretch (basic and acidic residues) spans Glu-1133 to Pro-1143. A compositionally biased stretch (low complexity) spans Ala-1144–Pro-1154. The span at Leu-1202–Phe-1211 shows a compositional bias: acidic residues. A compositionally biased stretch (polar residues) spans Ser-1220–Pro-1242. The span at Glu-1259–Pro-1270 shows a compositional bias: low complexity. A compositionally biased stretch (polar residues) spans Asp-1302 to Leu-1325. Over residues Thr-1333–Pro-1342 the composition is skewed to pro residues. Residues Lys-1475–Ser-1489 are compositionally biased toward low complexity. The 151-residue stretch at Lys-1517–Ser-1667 folds into the bMERB domain.

Belongs to the Mical family. Requires FAD as cofactor.

The protein resides in the nucleus. The protein localises to the cytoplasm. The catalysed reaction is L-methionyl-[F-actin] + NADPH + O2 + H(+) = L-methionyl-(R)-S-oxide-[F-actin] + NADP(+) + H2O. In terms of biological role, nuclear monooxygenase that promotes depolymerization of F-actin by mediating oxidation of specific methionine residues on actin and regulates the srf signaling. Acts by modifying nuclear actin subunits through the addition of oxygen to form methionine-sulfoxide, leading to promote actin filament severing and prevent repolymerization. Acts as a key regulator of the srf signaling pathway elicited by nerve growth factor and serum: mediates oxidation and subsequent depolymerization of nuclear actin, leading to increase mkl1/mrtf-a presence in the nucleus and promote srf:mkl1/mrtf-a-dependent gene transcription. The polypeptide is [F-actin]-monooxygenase mical2b (Danio rerio (Zebrafish)).